We begin with the raw amino-acid sequence, 1470 residues long: Niemann-Pick type C1-related protein (1470 aa).

Topologically, residues 1-3 (MFV) are cytoplasmic. Residues 4–34 (KNFIHKLKELKQKSLDKFANLLYDYGGYVYD) lie within the membrane without spanning it. Residue arginine 35 is a topological domain, cytoplasmic. Residues 36-56 (PCTFIICSLICCLLLTCGFYF) form a helical membrane-spanning segment. At 57 to 493 (KEHEKDIYKL…DEVDRISKID (437 aa)) the chain is on the extracellular side. 4 N-linked (GlcNAc...) asparagine glycosylation sites follow: asparagine 78, asparagine 165, asparagine 294, and asparagine 361. The helical transmembrane segment at 494-514 (NLTRLLLLIGVLLIFMYALFN) threads the bilayer. In terms of domain architecture, SSD spans 494–653 (NLTRLLLLIG…LTFLLSFLCI (160 aa)). At 515–524 (NVTSVLYRSK) the chain is on the cytoplasmic side. Residues 525-549 (PLCAVMGIFCGFLGFLSGSGFLYFL) traverse the membrane as a helical segment. Topologically, residues 550–554 (GVKSV) are extracellular. A helical transmembrane segment spans residues 555-582 (PPAETVPFLVIGVGVDDVFVILNSYSLL). Over 583 to 587 (FMVKD) the chain is Cytoplasmic. Residues 588-619 (NKKRIQMCLKDSALAITVTTLTNIIAFLISAI) traverse the membrane as a helical segment. The Extracellular portion of the chain corresponds to 620–622 (SPF). The helical transmembrane segment at 623 to 659 (YSICAFSLFTASSLFFGYLMVLTFLLSFLCIEAKLEK) threads the bilayer. Over 660–663 (KKRN) the chain is Cytoplasmic. The stretch at 664-673 (IFTGTFHLFR) is an intramembrane region. The Cytoplasmic segment spans residues 674-1057 (SIFMKSSKKN…IYEEPKGNIG (384 aa)). An intramembrane segment occupies 1058–1073 (KYFRSLVKNYYVPFLS). Position 1074 (serine 1074) is a topological domain, cytoplasmic. A helical membrane pass occupies residues 1075 to 1098 (RFGKTIVYIMFTIIIAMSIYGCTL). The Extracellular portion of the chain corresponds to 1099–1300 (MKKGIKYDKA…NHNVQMVCFH (202 aa)). A glycan (N-linked (GlcNAc...) asparagine) is linked at asparagine 1218. The chain crosses the membrane as a helical span at residues 1301-1334 (LSSIFNETDESIIEVTLINLGITILTILVVTAYI). Over 1335–1337 (IKG) the chain is Cytoplasmic. A helical transmembrane segment spans residues 1338 to 1361 (FYSCVIIALIIFLIDLCIFGFMCL). The Extracellular segment spans residues 1362-1367 (CGITMN). A helical transmembrane segment spans residues 1368–1394 (IISMVILVLSVGFSIDHTSHIVQAFSH). Over 1395 to 1399 (SMGRT) the chain is Cytoplasmic. Residues 1400–1431 (RDEKMKESLHLMIGPVLHSGLSTWFVISTLFF) form a helical membrane-spanning segment. Residues 1432 to 1434 (SNK) lie on the Extracellular side of the membrane. A helical transmembrane segment spans residues 1435 to 1466 (DFTVIFFQTLSLVLFFSITFSSMFLPVLLSSF). At 1467–1470 (GPLH) the chain is on the cytoplasmic side.

It belongs to the patched family.

Its subcellular location is the cell membrane. The catalysed reaction is cholesterol(in) = cholesterol(out). Its function is as follows. Facilitates cholesterol efflux from membranes in a pH-dependent manner. Required for maintaining normal parasite plasma membrane lipid composition. Required for the proper functioning of digestive vacuole. Required for the viability of blood-stage parasites. This Plasmodium falciparum (isolate 3D7) protein is Niemann-Pick type C1-related protein.